The following is a 558-amino-acid chain: Potassium-transporting ATPase potassium-binding subunit (558 aa).

The next 12 helical transmembrane spans lie at 2 to 22 (LQGF…APLL), 66 to 86 (VSAA…ILMF), 135 to 155 (ALGF…IAFI), 177 to 197 (ILLP…VPET), 253 to 273 (LLET…YGIM), 280 to 300 (GWLI…IAAV), 327 to 347 (FGWV…CGAV), 354 to 374 (LMPP…IWGG), 378 to 398 (GTAY…LMVG), 413 to 433 (IVLA…PTAI), 482 to 502 (LSAS…LIFL), and 528 to 548 (GITA…ILVL).

Belongs to the KdpA family. As to quaternary structure, the system is composed of three essential subunits: KdpA, KdpB and KdpC.

The protein localises to the cell inner membrane. In terms of biological role, part of the high-affinity ATP-driven potassium transport (or Kdp) system, which catalyzes the hydrolysis of ATP coupled with the electrogenic transport of potassium into the cytoplasm. This subunit binds the periplasmic potassium ions and delivers the ions to the membrane domain of KdpB through an intramembrane tunnel. This chain is Potassium-transporting ATPase potassium-binding subunit, found in Synechocystis sp. (strain ATCC 27184 / PCC 6803 / Kazusa).